A 276-amino-acid chain; its full sequence is 2-dehydro-3-deoxyphosphooctonate aldolase (276 aa).

This sequence belongs to the KdsA family.

It localises to the cytoplasm. The enzyme catalyses D-arabinose 5-phosphate + phosphoenolpyruvate + H2O = 3-deoxy-alpha-D-manno-2-octulosonate-8-phosphate + phosphate. It functions in the pathway carbohydrate biosynthesis; 3-deoxy-D-manno-octulosonate biosynthesis; 3-deoxy-D-manno-octulosonate from D-ribulose 5-phosphate: step 2/3. Its pathway is bacterial outer membrane biogenesis; lipopolysaccharide biosynthesis. This Stenotrophomonas maltophilia (strain R551-3) protein is 2-dehydro-3-deoxyphosphooctonate aldolase.